Consider the following 58-residue polypeptide: Leucine zipper protein 6 (58 aa).

As to expression, widely expressed, highest levels found in brain, placenta, spleen, testis, and ovary. Up-regulated in some tumor cells.

The sequence is that of Leucine zipper protein 6 (LUZP6) from Homo sapiens (Human).